The primary structure comprises 234 residues: Leucyl/phenylalanyl-tRNA--protein transferase (234 aa).

Belongs to the L/F-transferase family.

It is found in the cytoplasm. It catalyses the reaction N-terminal L-lysyl-[protein] + L-leucyl-tRNA(Leu) = N-terminal L-leucyl-L-lysyl-[protein] + tRNA(Leu) + H(+). The enzyme catalyses N-terminal L-arginyl-[protein] + L-leucyl-tRNA(Leu) = N-terminal L-leucyl-L-arginyl-[protein] + tRNA(Leu) + H(+). The catalysed reaction is L-phenylalanyl-tRNA(Phe) + an N-terminal L-alpha-aminoacyl-[protein] = an N-terminal L-phenylalanyl-L-alpha-aminoacyl-[protein] + tRNA(Phe). In terms of biological role, functions in the N-end rule pathway of protein degradation where it conjugates Leu, Phe and, less efficiently, Met from aminoacyl-tRNAs to the N-termini of proteins containing an N-terminal arginine or lysine. The sequence is that of Leucyl/phenylalanyl-tRNA--protein transferase from Shigella sonnei (strain Ss046).